Here is a 248-residue protein sequence, read N- to C-terminus: tRNA pseudouridine synthase A (248 aa).

Aspartate 53 serves as the catalytic Nucleophile. Residue tyrosine 111 participates in substrate binding.

Belongs to the tRNA pseudouridine synthase TruA family. In terms of assembly, homodimer.

It carries out the reaction uridine(38/39/40) in tRNA = pseudouridine(38/39/40) in tRNA. In terms of biological role, formation of pseudouridine at positions 38, 39 and 40 in the anticodon stem and loop of transfer RNAs. In Listeria welshimeri serovar 6b (strain ATCC 35897 / DSM 20650 / CCUG 15529 / CIP 8149 / NCTC 11857 / SLCC 5334 / V8), this protein is tRNA pseudouridine synthase A.